The sequence spans 627 residues: MAGITGVMNMKLAARPSSGRHSRGCRPAVVPSAGKQMLLVRRHPPGSASWPTRATGGGGGGVPAGATAADSSGQAKEEEEEDRASRNTSSFEPSIWGDFFLTYSSPLATSSAQKARMVHRAEQLKKQVAKLIAASGACSLYHRIHLVDALERLCLDYLFEDEINDMVTQIHNVDVSGCDLQTVAMWFYLLRNHGYRVSSDVVFAKFRDEQGGFAANNPRDLLNLYNAACLRTHGETILDEAASFTSKCLKSLAPYTYMEASLASEIKRALEIPLPRSVRIYGAKSRIAEYGNQTEANELVLELAKLNYNLVQLQHQEELKIITRWWNDLELQTRLSFARDRVVECYFWMVGVYFEPSYSRARVILSKVLAIVSLLDDTYDVYGTSQECELFTKCIESWDPAATGGRLPGNMKFIFAKILDTCQSFEDELAPDEKYRMHYLKTFIIDLVRAYNEEVKWREQGYVPATVEEHLQVSARSGGCHLLSCTSFVGMGDVADQEAFEWVRGVPKIVKALCIILRLSDDLKSYEREKMSSHVASTMESCMKEHQVPLEVARVKIQETIDETWKDFNEEWLNLNTNSHLPRELLERIFNLTRTMVYIYQQDDAYTNCHVIKDTINSLFVEPVSIT.

The N-terminal 53 residues, 1–53 (MAGITGVMNMKLAARPSSGRHSRGCRPAVVPSAGKQMLLVRRHPPGSASWPTR), are a transit peptide targeting the chloroplast. A disordered region spans residues 13-90 (AARPSSGRHS…EDRASRNTSS (78 aa)). (2E)-geranyl diphosphate is bound by residues Arg339, Asp376, Asp380, Arg518, and Asp521. 2 residues coordinate Mg(2+): Asp376 and Asp380. The DDXXD motif signature appears at 376 to 380 (DDTYD). Mg(2+) contacts are provided by Asp521, Ser525, and Glu529.

Belongs to the terpene synthase family. Tpsb subfamily. As to quaternary structure, monomer. It depends on Mg(2+) as a cofactor. The cofactor is Mn(2+). Expressed in seedling leaf sheaths and roots.

The protein localises to the plastid. Its subcellular location is the chloroplast. The catalysed reaction is (2E)-geranyl diphosphate + H2O = (S)-alpha-terpineol + diphosphate. The enzyme catalyses (2E)-geranyl diphosphate = (4S)-limonene + diphosphate. It catalyses the reaction (2E)-geranyl diphosphate = gamma-terpinene + diphosphate. It carries out the reaction (2E)-geranyl diphosphate = beta-myrcene + diphosphate. The catalysed reaction is (2E)-geranyl diphosphate = terpinolene + diphosphate. The enzyme catalyses (2E)-geranyl diphosphate + H2O = 4-terpineol + diphosphate. It functions in the pathway secondary metabolite biosynthesis; terpenoid biosynthesis. Component of the volatile terpenes biosynthesis pathways. Mediates the synthesis of a blend of monoterpenes. Converts mainly geranyl diphosphate to alpha-terpineol. Also triggers the biosynthesis of minor monoterpenes including limonene, gamma-terpinene, beta-myrcene, terpinolene and 4-terpineol. The chain is Alpha-terpineol synthase, chloroplastic from Zea mays (Maize).